Here is a 590-residue protein sequence, read N- to C-terminus: Glypican-3 (590 aa).

Positions 1-25 (MMPGLKLYGALILCVLVLPFSRPSS) are cleaved as a signal peptide. Cystine bridges form between C30-C67, C60-C255, C68-C258, C190-C342, C245-C278, C267-C418, and C271-C406. N-linked (GlcNAc...) asparagine glycosylation is found at N119 and N234. N-linked (GlcNAc...) asparagine glycosylation occurs at N414. 2 disordered regions span residues 429 to 450 (PGPG…TPEP) and 476 to 520 (WRAR…SGLG). Over residues 495-513 (TDEDEEGLESGDCDDEDEC) the composition is skewed to acidic residues. O-linked (Xyl...) (glycosaminoglycan) serine glycosylation is found at S504 and S517.

Belongs to the glypican family. In terms of assembly, heterodimer; disulfide-linked. Cleavage by a furin-like convertase results in production of alpha and beta chains which form a disulfide-linked heterodimer. Post-translationally, O-glycosylated; contains heparan sulfate and/or chondroitin sulfate. Cleaved intracellularly by a furin-like convertase to generate 2 subunits, alpha and beta, which remain associated through disulfide bonds and are associated with the cell surface via the GPI-anchor. This processing is essential for its role in inhibition of hedgehog signaling. A second proteolytic event may result in cleavage of the protein on the cell surface, separating it from the GPI-anchor and leading to its shedding from the cell surface. In terms of tissue distribution, maternally expressed and is almost ubiquitous during blastula and gastrula stages but becomes restricted to the prospective hindbrain by 24 hours post-fertilization.

The protein localises to the cell membrane. Its function is as follows. Cell surface proteoglycan. Negatively regulates the hedgehog signaling pathway. Positively regulates the canonical and non-canonical Wnt signaling pathways. Binds to CD81 which decreases the availability of free CD81 for binding to the transcriptional repressor HHEX, resulting in nuclear translocation of HHEX and transcriptional repression. Inhibits the dipeptidyl peptidase activity of DPP4. Plays a role in limb patterning and skeletal development. Modulates the effects of growth factors on renal branching morphogenesis. Required for coronary vascular development. Plays a role in regulating cell movements during gastrulation. In Danio rerio (Zebrafish), this protein is Glypican-3.